Reading from the N-terminus, the 181-residue chain is Shikimate kinase (181 aa).

Position 11 to 16 (11 to 16 (GAGKSK)) interacts with ATP. Residue serine 15 participates in Mg(2+) binding. Positions 33, 58, and 80 each coordinate substrate. An ATP-binding site is contributed by arginine 128. Arginine 144 lines the substrate pocket.

This sequence belongs to the shikimate kinase family. In terms of assembly, monomer. Requires Mg(2+) as cofactor.

Its subcellular location is the cytoplasm. It catalyses the reaction shikimate + ATP = 3-phosphoshikimate + ADP + H(+). It participates in metabolic intermediate biosynthesis; chorismate biosynthesis; chorismate from D-erythrose 4-phosphate and phosphoenolpyruvate: step 5/7. In terms of biological role, catalyzes the specific phosphorylation of the 3-hydroxyl group of shikimic acid using ATP as a cosubstrate. The chain is Shikimate kinase from Leptospira biflexa serovar Patoc (strain Patoc 1 / Ames).